The sequence spans 708 residues: Glutamate--tRNA ligase, cytoplasmic (708 aa).

2 interaction with ARC1 regions span residues 106–115 and 141–157; these read NLRTFILGGL and KVDVNVSRWYTLLEMDP. 205–207 provides a ligand contact to L-glutamate; it reads RFP. The short motif at 210–219 is the 'HIGH' region element; sequence PSGYLHIGHA. H215 is an ATP binding site. D241 is a binding site for L-glutamate. Phosphothreonine is present on T300. L-glutamate contacts are provided by residues 382–386 and R400; that span reads YDFCV. Residues E403 and 437–441 contribute to the ATP site; that span reads LLSKR. The 'KMSKS' region signature appears at 437–441; sequence LLSKR.

Belongs to the class-I aminoacyl-tRNA synthetase family. Glutamate--tRNA ligase type 2 subfamily. As to quaternary structure, component of a yeast aminoacyl-tRNA synthase (aaRS) complex formed by methionyl-tRNA synthase MES1, glutamyl-tRNA synthase GUS1 and the tRNA aminoacylation cofactor ARC1 in a stoichiometric complex. Interacts (via N-ter) with ARC1 (via N-ter). Can also form a stable binary complex with ARC1 that is functional in terms of aminoacylation. ARC1 increases the affinity for cognate tRNAs due to the presence of a tRNA binding domain in the middle and C-terminal part of ARC1.

Its subcellular location is the cytoplasm. The protein localises to the mitochondrion. The catalysed reaction is tRNA(Glu) + L-glutamate + ATP = L-glutamyl-tRNA(Glu) + AMP + diphosphate. Functionally, catalyzes the attachment of glutamate to tRNA(Glu) in a two-step reaction: glutamate is first activated by ATP to form Glu-AMP and then transferred to the acceptor end of tRNA(Glu). In mitochondria, constitutes the nondiscriminating glutamyl-tRNA synthase that generates the mitochondrial mischarged glutamyl-tRNA(Gln) substrate for the tRNA-dependent amidotransferase (AdT), which generates mitochondrial glutaminyl-tRNA(Gln) by transamidation of glutamyl-tRNA(Gln). The protein is Glutamate--tRNA ligase, cytoplasmic (GUS1) of Saccharomyces cerevisiae (strain ATCC 204508 / S288c) (Baker's yeast).